Consider the following 153-residue polypeptide: Ribosome maturation factor RimP (153 aa).

This sequence belongs to the RimP family.

Its subcellular location is the cytoplasm. Its function is as follows. Required for maturation of 30S ribosomal subunits. In Rippkaea orientalis (strain PCC 8801 / RF-1) (Cyanothece sp. (strain PCC 8801)), this protein is Ribosome maturation factor RimP.